Here is a 178-residue protein sequence, read N- to C-terminus: High mobility group B protein 1 (178 aa).

Basic and acidic residues-rich tracts occupy residues Met-1–Lys-52 and Ala-101–Met-118. Disordered regions lie at residues Met-1 to Ala-59 and Asn-75 to Asp-178. A DNA-binding region (HMG box) is located at residues Pro-53 to Asn-122. Residues Ser-137 and Ser-146 each carry the phosphoserine modification. A compositionally biased stretch (acidic residues) spans Asn-140–Asp-178.

Belongs to the HMGB family. In terms of tissue distribution, expressed in cotyledons, roots, stems, leaves and flowers (excluding pedicels).

The protein localises to the nucleus. Its function is as follows. Binds preferentially double-stranded DNA. Modulates general plant growth and stress tolerance. Confers sensitivity to salt and genotoxic (methyl methanesulfonate, MMS) stresses. In Arabidopsis thaliana (Mouse-ear cress), this protein is High mobility group B protein 1 (HMGB1).